The following is a 289-amino-acid chain: Light-independent protochlorophyllide reductase iron-sulfur ATP-binding protein (289 aa).

Residues 10-15 and Lys39 contribute to the ATP site; that span reads GIGKST. Position 14 (Ser14) interacts with Mg(2+). 2 residues coordinate [4Fe-4S] cluster: Cys95 and Cys129. 180 to 181 serves as a coordination point for ATP; sequence NR.

Belongs to the NifH/BchL/ChlL family. Homodimer. Protochlorophyllide reductase is composed of three subunits; ChlL, ChlN and ChlB. [4Fe-4S] cluster is required as a cofactor.

Its subcellular location is the plastid. It localises to the chloroplast. The catalysed reaction is chlorophyllide a + oxidized 2[4Fe-4S]-[ferredoxin] + 2 ADP + 2 phosphate = protochlorophyllide a + reduced 2[4Fe-4S]-[ferredoxin] + 2 ATP + 2 H2O. The protein operates within porphyrin-containing compound metabolism; chlorophyll biosynthesis (light-independent). In terms of biological role, component of the dark-operative protochlorophyllide reductase (DPOR) that uses Mg-ATP and reduced ferredoxin to reduce ring D of protochlorophyllide (Pchlide) to form chlorophyllide a (Chlide). This reaction is light-independent. The L component serves as a unique electron donor to the NB-component of the complex, and binds Mg-ATP. The protein is Light-independent protochlorophyllide reductase iron-sulfur ATP-binding protein of Marchantia polymorpha (Common liverwort).